Consider the following 480-residue polypeptide: Glycogen synthase (480 aa).

This sequence belongs to the glycosyltransferase 1 family. Bacterial/plant glycogen synthase subfamily.

The catalysed reaction is [(1-&gt;4)-alpha-D-glucosyl](n) + ADP-alpha-D-glucose = [(1-&gt;4)-alpha-D-glucosyl](n+1) + ADP + H(+). It functions in the pathway glycan biosynthesis; glycogen biosynthesis. Synthesizes alpha-1,4-glucan chains using ADP-glucose. The polypeptide is Glycogen synthase (Rhizobium etli (strain ATCC 51251 / DSM 11541 / JCM 21823 / NBRC 15573 / CFN 42)).